The primary structure comprises 321 residues: Lipoyl synthase (321 aa).

Positions 68, 73, 79, 94, 98, 101, and 308 each coordinate [4Fe-4S] cluster. Residues 80-297 (FNHGTATFMI…KAEAMAMGFT (218 aa)) form the Radical SAM core domain.

This sequence belongs to the radical SAM superfamily. Lipoyl synthase family. The cofactor is [4Fe-4S] cluster.

The protein resides in the cytoplasm. It catalyses the reaction [[Fe-S] cluster scaffold protein carrying a second [4Fe-4S](2+) cluster] + N(6)-octanoyl-L-lysyl-[protein] + 2 oxidized [2Fe-2S]-[ferredoxin] + 2 S-adenosyl-L-methionine + 4 H(+) = [[Fe-S] cluster scaffold protein] + N(6)-[(R)-dihydrolipoyl]-L-lysyl-[protein] + 4 Fe(3+) + 2 hydrogen sulfide + 2 5'-deoxyadenosine + 2 L-methionine + 2 reduced [2Fe-2S]-[ferredoxin]. It functions in the pathway protein modification; protein lipoylation via endogenous pathway; protein N(6)-(lipoyl)lysine from octanoyl-[acyl-carrier-protein]: step 2/2. In terms of biological role, catalyzes the radical-mediated insertion of two sulfur atoms into the C-6 and C-8 positions of the octanoyl moiety bound to the lipoyl domains of lipoate-dependent enzymes, thereby converting the octanoylated domains into lipoylated derivatives. The sequence is that of Lipoyl synthase from Pectobacterium atrosepticum (strain SCRI 1043 / ATCC BAA-672) (Erwinia carotovora subsp. atroseptica).